Reading from the N-terminus, the 128-residue chain is MSGRGKTGGKARAKAKTRSSRAGLQFPVGRVHRLLRKGNYAERVGAGAPVYLAAVLEYLTAEILELAGNAARDNKKTRIIPRHLQLAVRNDEELNKLLGGVTIAQGGVLPNIQAVLLPKKTEKAVKAK.

The segment at 1-22 (MSGRGKTGGKARAKAKTRSSRA) is disordered. Serine 2 carries the N-acetylserine modification. Residue serine 2 is modified to Phosphoserine. Lysine 6 bears the N6-(2-hydroxyisobutyryl)lysine mark. An N6-acetyllysine modification is found at lysine 6. Basic residues predominate over residues 7-19 (TGGKARAKAKTRS). Lysine 10 carries the post-translational modification N6-(2-hydroxyisobutyryl)lysine; alternate. Lysine 10 bears the N6-lactoyllysine; alternate mark. Lysine 10 carries the post-translational modification N6-succinyllysine. Residues lysine 14 and lysine 16 each participate in a glycyl lysine isopeptide (Lys-Gly) (interchain with G-Cter in ubiquitin) cross-link. At lysine 37 the chain carries N6-(2-hydroxyisobutyryl)lysine; alternate. N6-(2-hydroxyisobutyryl)lysine occurs at positions 75 and 76. Lysine 96 carries the N6-(2-hydroxyisobutyryl)lysine; alternate modification. An N6-succinyllysine modification is found at lysine 96. Position 96 is an N6-glutaryllysine; alternate (lysine 96). Position 105 is an N5-methylglutamine (glutamine 105). Lysine 119 carries the N6-(2-hydroxyisobutyryl)lysine; alternate modification. An N6-glutaryllysine; alternate mark is found at lysine 119, lysine 120, and lysine 126. Lysine 120 is covalently cross-linked (Glycyl lysine isopeptide (Lys-Gly) (interchain with G-Cter in ubiquitin)).

As to quaternary structure, the nucleosome is a histone octamer containing two molecules each of H2A, H2B, H3 and H4 assembled in one H3-H4 heterotetramer and two H2A-H2B heterodimers. The octamer wraps approximately 147 bp of DNA. Monoubiquitination of Lys-120 (H2AK119Ub) gives a specific tag for epigenetic transcriptional repression. Following DNA double-strand breaks (DSBs), it is ubiquitinated through 'Lys-63' linkage of ubiquitin moieties, leading to the recruitment of repair proteins to sites of DNA damage. H2AK119Ub and ionizing radiation-induced 'Lys-63'-linked ubiquitination are distinct events. Post-translationally, phosphorylation on Ser-2 is enhanced during mitosis. Phosphorylation on Ser-2 directly represses transcription. In terms of processing, glutamine methylation at Gln-105 (H2AQ104me) by FBL is specifically dedicated to polymerase I. It is present at 35S ribosomal DNA locus and impairs binding of the FACT complex. Expressed and secreted by skin epithelium.

It localises to the nucleus. The protein localises to the chromosome. Core component of nucleosome. Nucleosomes wrap and compact DNA into chromatin, limiting DNA accessibility to the cellular machineries which require DNA as a template. Histones thereby play a central role in transcription regulation, DNA repair, DNA replication and chromosomal stability. DNA accessibility is regulated via a complex set of post-translational modifications of histones, also called histone code, and nucleosome remodeling. Functionally, the secreted form has antibacterial activity against Gram-positive bacteria and antifungal activity against S.cerevisiae. The chain is Histone H2A from Oncorhynchus mykiss (Rainbow trout).